A 111-amino-acid polypeptide reads, in one-letter code: MPANARSHAVLTTESKVTIRGQTTIPAPVREALKLKPGQDSIHYEILPGGQVFMCRLGDEQEDHTMNAFLRFLDADIQNNPQKTRPFNIQQGKKLVAGMDVNIDDEIGDDE.

The SpoVT-AbrB domain occupies 12 to 59; it reads TTESKVTIRGQTTIPAPVREALKLKPGQDSIHYEILPGGQVFMCRLGD.

Homodimer; forms a complex with YhaV with stoichiometry PrlF(2)-YhaV(4), possibly as a YhaV(2)-PrlF(2)-YhaV(2) complex like the MazFE complex. This complex is seen to dimerize in solution.

The protein localises to the cytoplasm. In terms of biological role, antitoxin component of a type II toxin-antitoxin (TA) system. Labile antitoxin that binds to the YhaV toxin and neutralizes its ribonuclease activity. Also acts as a transcription factor. The YhaV/PrlF complex binds the prlF-yhaV operon, probably negatively regulating its expression. Negatively regulates its own expression as well as relieving the export block imposed by high-level synthesis of the LamB-LacZ hybrid protein. Overexpression leads to increased doubling time and also suppresses a htrA (degP) null phenotype. This chain is Antitoxin PrlF (prlF), found in Escherichia coli (strain K12).